Here is a 205-residue protein sequence, read N- to C-terminus: Large ribosomal subunit protein bL9 (205 aa).

Positions R160–A205 are disordered. Over residues E184 to D195 the composition is skewed to low complexity.

This sequence belongs to the bacterial ribosomal protein bL9 family.

Binds to the 23S rRNA. The chain is Large ribosomal subunit protein bL9 from Anaplasma phagocytophilum (strain HZ).